The following is a 296-amino-acid chain: tRNA dimethylallyltransferase (296 aa).

11–18 (GPTAVGKT) contributes to the ATP binding site. Residue 13 to 18 (TAVGKT) coordinates substrate. The segment at 36–39 (DSQQ) is interaction with substrate tRNA.

This sequence belongs to the IPP transferase family. Monomer. It depends on Mg(2+) as a cofactor.

The enzyme catalyses adenosine(37) in tRNA + dimethylallyl diphosphate = N(6)-dimethylallyladenosine(37) in tRNA + diphosphate. Catalyzes the transfer of a dimethylallyl group onto the adenine at position 37 in tRNAs that read codons beginning with uridine, leading to the formation of N6-(dimethylallyl)adenosine (i(6)A). In Streptococcus equi subsp. zooepidemicus (strain H70), this protein is tRNA dimethylallyltransferase.